The chain runs to 410 residues: Arginine deiminase (410 aa).

C400 serves as the catalytic Amidino-cysteine intermediate.

Belongs to the arginine deiminase family.

The protein resides in the cytoplasm. It catalyses the reaction L-arginine + H2O = L-citrulline + NH4(+). Its pathway is amino-acid degradation; L-arginine degradation via ADI pathway; carbamoyl phosphate from L-arginine: step 1/2. In Bacillus cereus (strain ATCC 10987 / NRS 248), this protein is Arginine deiminase.